We begin with the raw amino-acid sequence, 177 residues long: Large ribosomal subunit protein uL6 (177 aa).

This sequence belongs to the universal ribosomal protein uL6 family. As to quaternary structure, part of the 50S ribosomal subunit.

Functionally, this protein binds to the 23S rRNA, and is important in its secondary structure. It is located near the subunit interface in the base of the L7/L12 stalk, and near the tRNA binding site of the peptidyltransferase center. The sequence is that of Large ribosomal subunit protein uL6 from Acinetobacter baumannii (strain SDF).